We begin with the raw amino-acid sequence, 315 residues long: Prephenate dehydratase (315 aa).

The Prephenate dehydratase domain maps to arginine 3–arginine 190. Residues serine 204–proline 281 form the ACT domain.

As to quaternary structure, homodimer.

It carries out the reaction prephenate + H(+) = 3-phenylpyruvate + CO2 + H2O. It participates in amino-acid biosynthesis; L-phenylalanine biosynthesis; phenylpyruvate from prephenate: step 1/1. The protein is Prephenate dehydratase (pheA) of Mycobacterium sp. (strain JLS).